A 109-amino-acid chain; its full sequence is uncharacterized protein (109 aa).

Residues K27–V89 adopt a coiled-coil conformation.

This is an uncharacterized protein from Streptococcus pneumoniae.